The sequence spans 224 residues: MSKKALCIISGGMDSTLCAYLAKKEGYEIIALHFDYEQRTQEKERECFKQICKALKVEKSYILDVSFIKDIGGNALTDKSIDIPKNELCISDTPPITYVPFRNGIFLSIAGSLAEKENCESIFIGVVEEDGSGYPDCTDEFIQKAQEFINEGTSKNFKVYIKTPLVRLNKAKIVELALKENVPLELTWSCYESEDEACGECDSCLLRLRGFEKVGFKDKIKYKS.

9 to 19 contributes to the ATP binding site; that stretch reads ISGGMDSTLCA. The Zn(2+) site is built by Cys-190, Cys-198, Cys-201, and Cys-204.

It belongs to the QueC family. Requires Zn(2+) as cofactor.

It catalyses the reaction 7-carboxy-7-deazaguanine + NH4(+) + ATP = 7-cyano-7-deazaguanine + ADP + phosphate + H2O + H(+). It functions in the pathway purine metabolism; 7-cyano-7-deazaguanine biosynthesis. Catalyzes the ATP-dependent conversion of 7-carboxy-7-deazaguanine (CDG) to 7-cyano-7-deazaguanine (preQ(0)). The polypeptide is 7-cyano-7-deazaguanine synthase (Campylobacter jejuni subsp. jejuni serotype O:6 (strain 81116 / NCTC 11828)).